Consider the following 451-residue polypeptide: Sensor histidine kinase CssS (451 aa).

Over 1–9 the chain is Cytoplasmic; it reads MKNKPLAFQ. A helical membrane pass occupies residues 10 to 30; the sequence is IWVVISGILLAISILLLVLFS. The Extracellular segment spans residues 31 to 165; it reads NTLRDFFTNE…RDDLAYTLFK (135 aa). Residues 166 to 186 form a helical membrane-spanning segment; it reads QLLFIIAVVILLSWIPAIWLA. Positions 187-239 constitute an HAMP domain; that stretch reads KYLSRPLVSFEKHVKRISEQDWDDPVKVDRKDEIGKLGHTIEEMRQKLVQKDE. At 187–451 the chain is on the cytoplasmic side; that stretch reads KYLSRPLVSF…GVTYRIAVPK (265 aa). The Histidine kinase domain maps to 247-451; that stretch reads NISHDLKTPV…GVTYRIAVPK (205 aa). H250 bears the Phosphohistidine; by autocatalysis mark.

Its subcellular location is the cell membrane. It catalyses the reaction ATP + protein L-histidine = ADP + protein N-phospho-L-histidine.. Member of the two-component regulatory system CssS/CssR required to control the cellular response to secretion stress. Required for the transcription of htrA. Could detect misfolded proteins at the membrane-cell wall interface and then activate CssR by phosphorylation. This Bacillus subtilis (strain 168) protein is Sensor histidine kinase CssS (cssS).